We begin with the raw amino-acid sequence, 544 residues long: Cannabidiolic acid synthase (544 aa).

Residues 1–28 (MKCSTFSFWFVCKIIFFFFSFNIQTSIA) form the signal peptide. The cysteines at positions 37 and 99 are disulfide-linked. 2 N-linked (GlcNAc...) asparagine glycosylation sites follow: Asn45 and Asn65. Residues 77–251 (TTPKPLVIVT…VAWKIRLVAV (175 aa)) enclose the FAD-binding PCMH-type domain. FAD-binding positions include 109 to 115 (TRSGGHD) and Ser120. The 6-(S-cysteinyl)-8alpha-(pros-histidyl)-FAD (His-Cys) cross-link spans 114–176 (HDSEGMSYIS…ENLSLAAGYC (63 aa)). Asn168 carries an N-linked (GlcNAc...) asparagine glycan. FAD is bound by residues Cys176, 180–184 (CAGGH), Tyr190, Glu236, and Ile241. Cannabigerolate is bound at residue His291. 3 N-linked (GlcNAc...) asparagine glycosylation sites follow: Asn296, Asn304, and Asn328. Residues Tyr416 and Glu441 each contribute to the cannabigerolate site. 480 to 482 (YLN) provides a ligand contact to FAD. Tyr483 acts as the Proton acceptor in catalysis. N-linked (GlcNAc...) asparagine glycosylation is present at Asn498.

This sequence belongs to the oxygen-dependent FAD-linked oxidoreductase family. As to quaternary structure, monomer. It depends on FAD as a cofactor. Post-translationally, glycosylated. The FAD cofactor is bound via a bicovalent 6-S-cysteinyl, 8alpha-N1-histidyl FAD linkage. Expressed in young leaves.

The protein resides in the secreted. Its subcellular location is the extracellular space. The protein localises to the apoplast. The catalysed reaction is cannabigerolate + O2 = cannabidiolate + H2O2. It participates in secondary metabolite biosynthesis; terpenoid biosynthesis. Inhibited by Hg(2+). Oxidoreductase involved in the biosynthesis of cannabinoids-related terpenophenolic natural products, which have pharmacological activity. Catalyzes the stereoselective oxidative cyclization of the monoterpene moiety in cannabigerolic acid (CBGA), producing cannabidiolate (CBDA), the major cannabioid in fiber-type Cannabis plants. Can also use cannabinerolic acid as substrate, but not cannabigerol or cannabinerol. The protein is Cannabidiolic acid synthase of Cannabis sativa (Hemp).